Consider the following 142-residue polypeptide: Nucleoside diphosphate kinase (142 aa).

ATP-binding residues include lysine 11, phenylalanine 59, arginine 87, threonine 93, arginine 104, and asparagine 114. Histidine 117 functions as the Pros-phosphohistidine intermediate in the catalytic mechanism.

It belongs to the NDK family. As to quaternary structure, homotetramer. It depends on Mg(2+) as a cofactor.

It localises to the cytoplasm. It carries out the reaction a 2'-deoxyribonucleoside 5'-diphosphate + ATP = a 2'-deoxyribonucleoside 5'-triphosphate + ADP. The catalysed reaction is a ribonucleoside 5'-diphosphate + ATP = a ribonucleoside 5'-triphosphate + ADP. Major role in the synthesis of nucleoside triphosphates other than ATP. The ATP gamma phosphate is transferred to the NDP beta phosphate via a ping-pong mechanism, using a phosphorylated active-site intermediate. This Photobacterium profundum (strain SS9) protein is Nucleoside diphosphate kinase.